The following is a 281-amino-acid chain: Bis(5'-nucleosyl)-tetraphosphatase, symmetrical (281 aa).

This sequence belongs to the Ap4A hydrolase family.

It carries out the reaction P(1),P(4)-bis(5'-adenosyl) tetraphosphate + H2O = 2 ADP + 2 H(+). Functionally, hydrolyzes diadenosine 5',5'''-P1,P4-tetraphosphate to yield ADP. In Pectobacterium carotovorum subsp. carotovorum (strain PC1), this protein is Bis(5'-nucleosyl)-tetraphosphatase, symmetrical.